We begin with the raw amino-acid sequence, 524 residues long: Keratin, type II cytoskeletal 71 (524 aa).

The interval 1–130 is head; sequence MNRQFTCKSG…DPEIQKVRAQ (130 aa). Positions 131-166 are coil 1A; sequence EREQIKALNNKFASFIDKVRFLEQQNQVLETKWELL. Positions 131–444 constitute an IF rod domain; the sequence is EREQIKALNN…KLLESEECRM (314 aa). Residues 167 to 185 are linker 1; it reads QQLDLNNCKNNLEPILEGY. Positions 186-277 are coil 1B; the sequence is ISNLRKQLET…CLYEAEIAQI (92 aa). The segment at 278 to 301 is linker 12; that stretch reads QSHISDMSVILSMDNNRDLNLDSI. The coil 2 stretch occupies residues 302–440; sequence IDEVRAQYEE…ATYRKLLESE (139 aa). Residues 441 to 524 form a tail region; the sequence is ECRMSGEFPS…QSASSKKASR (84 aa). Residues 491–524 are disordered; it reads VRGGEGRSRGSTSDYKDTLGKGSSQSASSKKASR. A compositionally biased stretch (basic and acidic residues) spans 494–509; sequence GEGRSRGSTSDYKDTL. Residues 510–524 are compositionally biased toward low complexity; sequence GKGSSQSASSKKASR.

Belongs to the intermediate filament family. As to quaternary structure, heterodimer of a type I and a type II keratin. Associates with KRT16 and/or KRT17.

Its subcellular location is the cytoplasm. The protein localises to the cytoskeleton. Functionally, plays a central role in hair formation. Essential component of keratin intermediate filaments in the inner root sheath (IRS) of the hair follicle. In Felis catus (Cat), this protein is Keratin, type II cytoskeletal 71 (KRT71).